A 289-amino-acid polypeptide reads, in one-letter code: MRPLSGLIALALLLLLLLTAPSSAADTETESSGSPLTPGAEEPRRVVKRAPTSSFIGMRGKKDEEHDTSEGNWLGSGPDPLDYADEEADSSYAENGRRLKKAPLAFVGLRGKKFIPINNRLSDVLQSLEEERLRDSLLQDFFDRVAGRDGSAVGKRAPTGFTGMRGKRPALLAGDDDAEADEATELQQKRAPVNSFVGMRGKKDVSHQHYKRAALSDSYDLRGKQQRFADFNSKFVAVRGKKSDLEGNGVGIGDDHEQALVHPWLYLWGEKRAPNGFLGMRGKRPALFE.

The first 24 residues, 1-24, serve as a signal peptide directing secretion; that stretch reads MRPLSGLIALALLLLLLLTAPSSA. The tract at residues 24 to 94 is disordered; that stretch reads AADTETESSG…DEEADSSYAE (71 aa). The propeptide occupies 25–47; it reads ADTETESSGSPLTPGAEEPRRVV. The residue at position 59 (R59) is an Arginine amide. Residues 60 to 69 show a composition bias toward basic and acidic residues; it reads GKKDEEHDTS. An Asparagine amide modification is found at N95. An Arginine amide modification is found at R110. Position 153 is a valine amide (V153). An arginine amide mark is found at R165, R200, R239, and R281. A propeptide spanning residues 285–289 is cleaved from the precursor; it reads PALFE.

This sequence belongs to the tachykinin family. Strong expression is seen in a group of 14 cells plus one isolated cell in the midgut of stage 17 embryos. Also expressed in a pair of medially located unidentified cells, just posterior to the brain, and in two lateral groups of cells that may be associated with tracheae. Expression in the larval gut is restricted to cells with endocrine cell-like morphology in the posterior midgut, just anterior to the malphigian tubules. In the brain, expression is detected in a restricted number of neuronal cell bodies. Expression in the adult female gut is restricted to the midgut with no expression detected in the hindgut.

It localises to the secreted. In terms of biological role, tachykinins are active peptides which excite neurons, evoke behavioral responses, are potent vasodilators and secretagogues, and contract (directly or indirectly) many smooth muscles. Stimulates gut muscle contractions. Required for the response to the male sex pheromone CH503 which is transferred from males to females during mating and inhibits courtship behavior by other males. The Gr68a gustatory receptor is required for detection of the pheromone and Gr68a-expressing neurons in the male foreleg relay signals to the suboesophageal zone (SEZ) which leads to courtship suppression through release of tachykinin from a cluster of 8-10 neurons in the SEZ. This is Tachykinins from Drosophila melanogaster (Fruit fly).